The chain runs to 244 residues: Adenosine 5'-phosphosulfate reductase (244 aa).

Cys-129, Cys-130, Cys-212, and Cys-215 together coordinate [4Fe-4S] cluster. Catalysis depends on Cys-240, which acts as the Nucleophile; cysteine thiosulfonate intermediate.

It belongs to the PAPS reductase family. CysH subfamily. Requires [4Fe-4S] cluster as cofactor.

The protein localises to the cytoplasm. The enzyme catalyses [thioredoxin]-disulfide + sulfite + AMP + 2 H(+) = adenosine 5'-phosphosulfate + [thioredoxin]-dithiol. It participates in sulfur metabolism; hydrogen sulfide biosynthesis; sulfite from sulfate. In terms of biological role, catalyzes the formation of sulfite from adenosine 5'-phosphosulfate (APS) using thioredoxin as an electron donor. The protein is Adenosine 5'-phosphosulfate reductase of Neisseria meningitidis serogroup A / serotype 4A (strain DSM 15465 / Z2491).